The primary structure comprises 314 residues: Calcium homeostasis modulator protein 4 (314 aa).

Over 1–14 (MCPTLNNIVSSLQR) the chain is Cytoplasmic. Residues 15 to 37 (NGIFINSLIAALTIGGQQLFSSS) form a helical membrane-spanning segment. At 38-48 (TFSCPCQVGKN) the chain is on the extracellular side. 2 disulfides stabilise this stretch: cysteine 41–cysteine 131 and cysteine 43–cysteine 162. The helical transmembrane segment at 49–71 (FYYGSAFLVIPALILLVAGFALR) threads the bilayer. Over 72–103 (SQMWTITGEYCCSCAPPYRRISPLECKLACLR) the chain is Cytoplasmic. A helical membrane pass occupies residues 104–129 (FFSITGRAVIAPLTWLAVTLLTGTYY). At 130 to 183 (ECAASEFASVDHYPMFDNVSASKREEILAGFPCCRSAPSDVILVRDEIALLHRY) the chain is on the extracellular side. A helical membrane pass occupies residues 184-207 (QSQMLGWILITLATIAALVSCCVA). At 208 to 314 (KCCSPLTSLQ…DRSRGIELKP (107 aa)) the chain is on the cytoplasmic side.

The protein belongs to the CALHM family. Oligomerizes to form decameric and undecameric channels. Two hemichannels can assemble in a tail-to-tail manner to form a gap junction. Placenta.

It is found in the cell membrane. Functionally, may assemble to form gap junction channel-like structures involved in intercellular communication. Channel gating and ion conductance are likely regulated by membrane lipids rather than by membrane depolarization or extracellular calcium levels. This chain is Calcium homeostasis modulator protein 4, found in Homo sapiens (Human).